The primary structure comprises 193 residues: Recombination protein RecR (193 aa).

Residues 61-76 (CSSCNALSESEVCEIC) form a C4-type zinc finger. One can recognise a Toprim domain in the interval 84–170 (SQLCMVLHPR…TFTKIAQGVP (87 aa)).

It belongs to the RecR family.

May play a role in DNA repair. It seems to be involved in an RecBC-independent recombinational process of DNA repair. It may act with RecF and RecO. This chain is Recombination protein RecR, found in Helicobacter pylori (strain P12).